The chain runs to 152 residues: Ribosome maturation factor RimP (152 aa).

This sequence belongs to the RimP family.

Its subcellular location is the cytoplasm. Functionally, required for maturation of 30S ribosomal subunits. This Paraburkholderia phymatum (strain DSM 17167 / CIP 108236 / LMG 21445 / STM815) (Burkholderia phymatum) protein is Ribosome maturation factor RimP.